We begin with the raw amino-acid sequence, 179 residues long: Replication restart protein DnaT (179 aa).

The tract at residues 1 to 83 is required for trimerization and to bind PriB; the sequence is MSSRILTSHF…FEEPAAAPVA (83 aa). The segment at 84-179 is binds ssDNA; it reads VPMGKFAMYA…DSHIPRGFRG (96 aa). Residues 151-179 form a disordered region; that stretch reads SRASNGGQPKRDVNSVSEPDSHIPRGFRG. A compositionally biased stretch (basic and acidic residues) spans 159–173; that stretch reads PKRDVNSVSEPDSHI.

The protein belongs to the DnaT family. Homotrimer. Interacts with PriB. Interacts with PriC. Component of the replication restart primosome. Primosome assembly occurs via a 'hand-off' mechanism. PriA binds to replication forks, subsequently PriB then DnaT bind; DnaT then displaces ssDNA to generate the helicase loading substrate.

Functionally, involved in the restart of stalled replication forks, which reloads the replicative helicase on sites other than the origin of replication. Can function in multiple replication restart pathways. Displaces ssDNA from a PriB-ssDNA complex. Probably forms a spiral filament on ssDNA. Binds single-stranded (ss)DNA. The minimal binding site is about 26 +/- 2 nucleotides (nt) per trimer. Two DNA-protein complexes are seen with 55 nt-long ssDNA. The polypeptide is Replication restart protein DnaT (Klebsiella pneumoniae subsp. pneumoniae (strain ATCC 700721 / MGH 78578)).